We begin with the raw amino-acid sequence, 219 residues long: Large ribosomal subunit protein bL25 (219 aa).

Residues 195–219 (EETTTTETSNEPEVIKKGKKEEEEK) are disordered. The segment covering 197-206 (TTTTETSNEP) has biased composition (low complexity). Positions 207–219 (EVIKKGKKEEEEK) are enriched in basic and acidic residues.

Belongs to the bacterial ribosomal protein bL25 family. CTC subfamily. In terms of assembly, part of the 50S ribosomal subunit; part of the 5S rRNA/L5/L18/L25 subcomplex. Contacts the 5S rRNA. Binds to the 5S rRNA independently of L5 and L18.

Its function is as follows. This is one of the proteins that binds to the 5S RNA in the ribosome where it forms part of the central protuberance. The sequence is that of Large ribosomal subunit protein bL25 from Fervidobacterium nodosum (strain ATCC 35602 / DSM 5306 / Rt17-B1).